We begin with the raw amino-acid sequence, 256 residues long: 3-isopropylmalate dehydratase small subunit 2 (256 aa).

The transit peptide at 1-59 (MAYSLPTFPQALPCSSTKTSSSLATFRSPFLRFNGSTSLIPSSISITSRGTSSPTIIPR) directs the protein to the chloroplast.

Belongs to the LeuD family. In terms of assembly, heterodimer of the large LEUC/IIL1 subunit and the small LEUD (SSU1, SSU2 or SSU3) subunits. Expressed in vascular bundles of roots, cotyledons and rosette leaves. Expressed in stem vascular bundles which branche off into lateral inflorescences. Expressed in connective tissues in anthers. In young seedlings, expressed in cotyledon epidermal cells and vasculare bundles. In hypocotyls, expressed in parenchyma cells surrounding the vasculature and further peripheral cells. In seedling roots, expressed in cells along the vasculature. In roots of adult plants, expressed in cells closely associated with the stele. In flowering stalks, expressed in parenchyma cells associated with the phloem or the xylem. Expressed in the vasculature of sepals and petals.

The protein localises to the plastid. The protein resides in the chloroplast stroma. It carries out the reaction (2R,3S)-3-isopropylmalate = (2S)-2-isopropylmalate. It catalyses the reaction a 2-(omega-methylsulfanyl)alkylmalate = a 2-(omega-methylsulfanyl)alkylmaleate + H2O. The enzyme catalyses 2-(3-methylsulfanyl)propylmalate = 2-(2-methylsulfanyl)propylmaleate + H2O. The catalysed reaction is a 3-(omega-methylsulfanyl)alkylmalate = a 2-(omega-methylsulfanyl)alkylmaleate + H2O. It carries out the reaction 2-(2-methylsulfanyl)ethylmalate = 2-(2-methylsulfanyl)ethylmaleate + H2O. It catalyses the reaction 3-(2-methylsulfanyl)ethylmalate = 2-(2-methylsulfanyl)ethylmaleate + H2O. The enzyme catalyses 3-(3-methylsulfanyl)propylmalate = 2-(2-methylsulfanyl)propylmaleate + H2O. Its pathway is amino-acid biosynthesis; L-leucine biosynthesis; L-leucine from 3-methyl-2-oxobutanoate: step 2/4. Catalyzes the isomerization between 2-isopropylmalate and 3-isopropylmalate, via the formation of 2-isopropylmaleate. Functions redundantly with LEUD2 in the methionine chain elongation pathway of aliphatic glucosinolate formation. The sequence is that of 3-isopropylmalate dehydratase small subunit 2 from Arabidopsis thaliana (Mouse-ear cress).